A 161-amino-acid chain; its full sequence is Nucleoside diphosphate kinase (161 aa).

ATP-binding residues include Lys-12, Phe-60, Arg-88, Thr-94, and Arg-105. The active-site Pros-phosphohistidine intermediate is the His-121.

The protein belongs to the NDK family. Requires Mg(2+) as cofactor.

The protein localises to the cytoplasm. The enzyme catalyses a 2'-deoxyribonucleoside 5'-diphosphate + ATP = a 2'-deoxyribonucleoside 5'-triphosphate + ADP. The catalysed reaction is a ribonucleoside 5'-diphosphate + ATP = a ribonucleoside 5'-triphosphate + ADP. Its function is as follows. Major role in the synthesis of nucleoside triphosphates other than ATP. The ATP gamma phosphate is transferred to the NDP beta phosphate via a ping-pong mechanism, using a phosphorylated active-site intermediate. This Pyrococcus furiosus (strain ATCC 43587 / DSM 3638 / JCM 8422 / Vc1) protein is Nucleoside diphosphate kinase.